Reading from the N-terminus, the 105-residue chain is MSEEELEQDELDGADEDDGEELAAADDGEADSSDGDEAPAPGKKAKAAVVEEELPSVEAKQKERDALAKAMEEFLSRGGKVQEIEPNVVADPPKKPDSKYGSRPI.

The segment covering methionine 1 to glutamate 37 has biased composition (acidic residues). The segment at methionine 1–isoleucine 105 is disordered. Basic and acidic residues-rich tracts occupy residues alanine 59 to glutamate 83 and proline 92 to isoleucine 105.

In terms of assembly, interacts with RNA polymerase.

Its function is as follows. Causes widespread changes in gene expression, and plays a direct role in the regulation of genes encoding ribosomal components. Associates with chromosomal DNA through interaction with RNA polymerase. Contributes to biofilm formation and secondary metabolite production. Important during transitions to and from the survival state. In Pseudomonas aeruginosa (strain UCBPP-PA14), this protein is Transcriptional regulator SutA.